Here is a 153-residue protein sequence, read N- to C-terminus: Endoribonuclease YbeY (153 aa).

Residues His-118, His-122, and His-128 each contribute to the Zn(2+) site.

The protein belongs to the endoribonuclease YbeY family. Zn(2+) serves as cofactor.

Its subcellular location is the cytoplasm. Its function is as follows. Single strand-specific metallo-endoribonuclease involved in late-stage 70S ribosome quality control and in maturation of the 3' terminus of the 16S rRNA. The protein is Endoribonuclease YbeY of Clostridioides difficile (strain 630) (Peptoclostridium difficile).